A 642-amino-acid chain; its full sequence is 1-deoxy-D-xylulose-5-phosphate synthase 2 (642 aa).

Thiamine diphosphate is bound by residues His79 and 120–122 (AHS). Asp155 serves as a coordination point for Mg(2+). Thiamine diphosphate contacts are provided by residues 156–157 (GS), Asn184, Tyr293, and Glu375. Residue Asn184 coordinates Mg(2+).

This sequence belongs to the transketolase family. DXPS subfamily. As to quaternary structure, homodimer. Mg(2+) serves as cofactor. Requires thiamine diphosphate as cofactor.

It catalyses the reaction D-glyceraldehyde 3-phosphate + pyruvate + H(+) = 1-deoxy-D-xylulose 5-phosphate + CO2. The protein operates within metabolic intermediate biosynthesis; 1-deoxy-D-xylulose 5-phosphate biosynthesis; 1-deoxy-D-xylulose 5-phosphate from D-glyceraldehyde 3-phosphate and pyruvate: step 1/1. In terms of biological role, catalyzes the acyloin condensation reaction between C atoms 2 and 3 of pyruvate and glyceraldehyde 3-phosphate to yield 1-deoxy-D-xylulose-5-phosphate (DXP). In Roseobacter denitrificans (strain ATCC 33942 / OCh 114) (Erythrobacter sp. (strain OCh 114)), this protein is 1-deoxy-D-xylulose-5-phosphate synthase 2.